We begin with the raw amino-acid sequence, 158 residues long: Pyruvoyl-dependent arginine decarboxylase (158 aa).

The residue at position 44 (serine 44) is a Pyruvic acid (Ser).

The protein belongs to the PdaD family. It depends on pyruvate as a cofactor.

It carries out the reaction L-arginine + H(+) = agmatine + CO2. This chain is Pyruvoyl-dependent arginine decarboxylase, found in Pyrococcus furiosus (strain ATCC 43587 / DSM 3638 / JCM 8422 / Vc1).